We begin with the raw amino-acid sequence, 242 residues long: Probable transcriptional regulatory protein NGK_1508 (242 aa).

Belongs to the TACO1 family.

It is found in the cytoplasm. This Neisseria gonorrhoeae (strain NCCP11945) protein is Probable transcriptional regulatory protein NGK_1508.